Consider the following 78-residue polypeptide: DNA-directed RNA polymerase subunit Rpo5 (78 aa).

This sequence belongs to the archaeal Rpo5/eukaryotic RPB5 RNA polymerase subunit family. As to quaternary structure, part of the RNA polymerase complex.

The protein resides in the cytoplasm. The catalysed reaction is RNA(n) + a ribonucleoside 5'-triphosphate = RNA(n+1) + diphosphate. Its function is as follows. DNA-dependent RNA polymerase (RNAP) catalyzes the transcription of DNA into RNA using the four ribonucleoside triphosphates as substrates. The polypeptide is DNA-directed RNA polymerase subunit Rpo5 (Methanosarcina mazei (strain ATCC BAA-159 / DSM 3647 / Goe1 / Go1 / JCM 11833 / OCM 88) (Methanosarcina frisia)).